The chain runs to 217 residues: MOB kinase activator 3A (217 aa).

Zn(2+) contacts are provided by Cys-83, Cys-88, His-165, and His-170.

The protein belongs to the MOB1/phocein family.

Functionally, may regulate the activity of kinases. The chain is MOB kinase activator 3A (MOB3A) from Homo sapiens (Human).